The following is a 73-amino-acid chain: MKKSLVLKASVAVATLVPMLSFAAEGDDPAKAAFNSLQASATEYIGYAWAMVVVIVGATIGIKLFKKFTSKAS.

A signal peptide spans 1 to 23 (MKKSLVLKASVAVATLVPMLSFA). Topologically, residues 24 to 47 (AEGDDPAKAAFNSLQASATEYIGY) are periplasmic. Residues 48–68 (AWAMVVVIVGATIGIKLFKKF) traverse the membrane as a helical segment. Residues 69 to 73 (TSKAS) are Cytoplasmic-facing.

Belongs to the inovirus capsid protein family. In terms of assembly, homomultimerizes. There are about 2,700 copies of this protein in the phage capsid.

The protein localises to the virion. It is found in the host cell inner membrane. Self assembles to form a helical capsid wrapping up the viral genomic DNA. The capsid displays a filamentous structure with a length of 760-1950 nm and a width of 6-8 nm. The virion assembly and budding take place at the host inner membrane. This chain is Capsid protein G8P (VIII), found in Enterobacteria phage M13 (Bacteriophage M13).